We begin with the raw amino-acid sequence, 393 residues long: Formate-dependent phosphoribosylglycinamide formyltransferase (393 aa).

N(1)-(5-phospho-beta-D-ribosyl)glycinamide is bound by residues 22–23 and glutamate 82; that span reads EL. Residues arginine 114, lysine 155, 160–165, 195–198, and glutamate 203 each bind ATP; these read SSGKGQ and EGFV. Residues 119 to 308 enclose the ATP-grasp domain; sequence RLAAEELGLV…EFALHVRAIL (190 aa). 2 residues coordinate Mg(2+): glutamate 267 and glutamate 279. N(1)-(5-phospho-beta-D-ribosyl)glycinamide-binding positions include aspartate 286, lysine 356, and 363–364; that span reads RR.

This sequence belongs to the PurK/PurT family. Homodimer.

It catalyses the reaction N(1)-(5-phospho-beta-D-ribosyl)glycinamide + formate + ATP = N(2)-formyl-N(1)-(5-phospho-beta-D-ribosyl)glycinamide + ADP + phosphate + H(+). Its pathway is purine metabolism; IMP biosynthesis via de novo pathway; N(2)-formyl-N(1)-(5-phospho-D-ribosyl)glycinamide from N(1)-(5-phospho-D-ribosyl)glycinamide (formate route): step 1/1. Functionally, involved in the de novo purine biosynthesis. Catalyzes the transfer of formate to 5-phospho-ribosyl-glycinamide (GAR), producing 5-phospho-ribosyl-N-formylglycinamide (FGAR). Formate is provided by PurU via hydrolysis of 10-formyl-tetrahydrofolate. The sequence is that of Formate-dependent phosphoribosylglycinamide formyltransferase from Solidesulfovibrio magneticus (strain ATCC 700980 / DSM 13731 / RS-1) (Desulfovibrio magneticus).